We begin with the raw amino-acid sequence, 185 residues long: MYSTTDFRKGLKIEIDGTPFEIVEFQHFKPGKGGAMVRTKLRNLLNDRMVDNTFRSGEKVGRPDMETREMQYLYREGDDLVFMDLTTYEQLHIAEDTTDGKAGFLKEAQQVRVLLYNGKPLDIDLPVSLVLEVTDTEPGAKGDTVSNVTKPATLETGIVIGVPIFVNIGDRVKVDTRTRDYLGRE.

This sequence belongs to the elongation factor P family.

The protein resides in the cytoplasm. The protein operates within protein biosynthesis; polypeptide chain elongation. Functionally, involved in peptide bond synthesis. Stimulates efficient translation and peptide-bond synthesis on native or reconstituted 70S ribosomes in vitro. Probably functions indirectly by altering the affinity of the ribosome for aminoacyl-tRNA, thus increasing their reactivity as acceptors for peptidyl transferase. This Nitratidesulfovibrio vulgaris (strain DSM 19637 / Miyazaki F) (Desulfovibrio vulgaris) protein is Elongation factor P.